The following is a 316-amino-acid chain: ATP synthase gamma chain (316 aa).

Belongs to the ATPase gamma chain family. In terms of assembly, F-type ATPases have 2 components, CF(1) - the catalytic core - and CF(0) - the membrane proton channel. CF(1) has five subunits: alpha(3), beta(3), gamma(1), delta(1), epsilon(1). CF(0) has three main subunits: a, b and c.

It localises to the cellular thylakoid membrane. Produces ATP from ADP in the presence of a proton gradient across the membrane. The gamma chain is believed to be important in regulating ATPase activity and the flow of protons through the CF(0) complex. The chain is ATP synthase gamma chain from Prochlorococcus marinus (strain NATL2A).